Consider the following 248-residue polypeptide: AA9 family lytic polysaccharide monooxygenase G (248 aa).

Residues 1–21 (MLPNAAGLLVAGVVSLSGVAA) form the signal peptide. Histidine 22 serves as a coordination point for Cu(2+). Asparagine 58 carries N-linked (GlcNAc...) asparagine glycosylation. A disulfide bond links cysteine 77 and cysteine 195. Histidine 107 is a binding site for Cu(2+). O2 is bound at residue glutamine 190. Tyrosine 192 contributes to the Cu(2+) binding site. N-linked (GlcNAc...) asparagine glycosylation occurs at asparagine 203.

The protein belongs to the polysaccharide monooxygenase AA9 family. Requires Cu(2+) as cofactor.

Its subcellular location is the secreted. It catalyses the reaction [(1-&gt;4)-beta-D-glucosyl]n+m + reduced acceptor + O2 = 4-dehydro-beta-D-glucosyl-[(1-&gt;4)-beta-D-glucosyl]n-1 + [(1-&gt;4)-beta-D-glucosyl]m + acceptor + H2O.. Its function is as follows. Lytic polysaccharide monooxygenase (LPMO) that depolymerizes crystalline and amorphous polysaccharides via the oxidation of scissile alpha- or beta-(1-4)-glycosidic bonds, yielding C1 or C4 oxidation products. Catalysis by LPMOs requires the reduction of the active-site copper from Cu(II) to Cu(I) by a reducing agent and H(2)O(2) or O(2) as a cosubstrate. This is AA9 family lytic polysaccharide monooxygenase G from Malbranchea cinnamomea (Thermophilic fungus).